The chain runs to 86 residues: MKTLLLTLVVVTIVCLDLGYTLTCVKSNSIWFPTSEDCPDGQNLCFKRWQYISPRMYDFTRGCAATCPKAEYRDVINCCGTDKCNK.

The N-terminal stretch at 1-21 (MKTLLLTLVVVTIVCLDLGYT) is a signal peptide. Finger loop stretches follow at residues 23-37 (TCVK…TSED), 44-63 (LCFK…TRGC), and 66-78 (TCPK…VINC). 4 disulfides stabilise this stretch: C24–C45, C38–C63, C67–C78, and C79–C84.

This sequence belongs to the three-finger toxin family. Short-chain subfamily. Aminergic toxin sub-subfamily. Expressed by the venom gland.

It localises to the secreted. Its function is as follows. Binds specifically and irreversibly to an allosteric site of the muscarinic acetylcholine M1 receptor (CHRM1) at subnanomolar concentrations and shows a very slow dissociation rate. It also inhibits agonist-mediated guanosine 5'-O-(3'-thiotriphosphate) (GTP-g-S) binding and downstream signaling, and decreases the dissociation rate of orthosteric antagonists (N-methylscopolamine (NMS) or pirenzepine). Is a potent negative allosteric modulator (NAM) for CHRM1 activation and a positive allosteric modulator (PAM) for antagonist binding. In Dendroaspis angusticeps (Eastern green mamba), this protein is Muscarinic toxin 7.